Consider the following 107-residue polypeptide: ATP synthase peripheral stalk subunit F6, mitochondrial (107 aa).

A mitochondrion-targeting transit peptide spans Met-1–Phe-31. N6-acetyllysine is present on residues Lys-40, Lys-45, and Lys-78. N6-acetyllysine; alternate occurs at positions 93 and 98. Residues Lys-93 and Lys-98 each carry the N6-succinyllysine; alternate modification. Residue Lys-104 is modified to N6-acetyllysine.

The protein belongs to the eukaryotic ATPase subunit F6 family. Component of the ATP synthase complex composed at least of ATP5F1A/subunit alpha, ATP5F1B/subunit beta, ATP5MC1/subunit c (homooctomer), MT-ATP6/subunit a, MT-ATP8/subunit 8, ATP5ME/subunit e, ATP5MF/subunit f, ATP5MG/subunit g, ATP5MK/subunit k, ATP5MJ/subunit j, ATP5F1C/subunit gamma, ATP5F1D/subunit delta, ATP5F1E/subunit epsilon, ATP5PF/subunit F6, ATP5PB/subunit b, ATP5PD/subunit d, ATP5PO/subunit OSCP. ATP synthase complex consists of a soluble F(1) head domain (subunits alpha(3) and beta(3)) - the catalytic core - and a membrane F(0) domain - the membrane proton channel (subunits c, a, 8, e, f, g, k and j). These two domains are linked by a central stalk (subunits gamma, delta, and epsilon) rotating inside the F1 region and a stationary peripheral stalk (subunits F6, b, d, and OSCP).

Its subcellular location is the mitochondrion. It is found in the mitochondrion inner membrane. In terms of biological role, subunit F6, of the mitochondrial membrane ATP synthase complex (F(1)F(0) ATP synthase or Complex V) that produces ATP from ADP in the presence of a proton gradient across the membrane which is generated by electron transport complexes of the respiratory chain. ATP synthase complex consist of a soluble F(1) head domain - the catalytic core - and a membrane F(1) domain - the membrane proton channel. These two domains are linked by a central stalk rotating inside the F(1) region and a stationary peripheral stalk. During catalysis, ATP synthesis in the catalytic domain of F(1) is coupled via a rotary mechanism of the central stalk subunits to proton translocation. In vivo, can only synthesize ATP although its ATP hydrolase activity can be activated artificially in vitro. Part of the complex F(0) domain. Part of the complex F(0) domain and the peripheric stalk, which acts as a stator to hold the catalytic alpha(3)beta(3) subcomplex and subunit a/ATP6 static relative to the rotary elements. The polypeptide is ATP synthase peripheral stalk subunit F6, mitochondrial (Pongo abelii (Sumatran orangutan)).